The following is an 86-amino-acid chain: Anti-adapter protein IraP (86 aa).

The stretch at 1–47 (MKNLIAELLLKLAQKEEESKELVAQVEALEIIVTAMLRNMAQSEQQM) forms a coiled coil.

This sequence belongs to the IraP family. As to quaternary structure, interacts with RssB.

It is found in the cytoplasm. Functionally, inhibits RpoS proteolysis by regulating RssB activity, thereby increasing the stability of the sigma stress factor RpoS especially during phosphate and magnesium starvation, but also in stationary phase and during nitrogen starvation. Its effect on RpoS stability is due to its interaction with RssB, which probably blocks the interaction of RssB with RpoS, and the consequent delivery of the RssB-RpoS complex to the ClpXP protein degradation pathway. The chain is Anti-adapter protein IraP from Salmonella arizonae (strain ATCC BAA-731 / CDC346-86 / RSK2980).